A 274-amino-acid chain; its full sequence is Large ribosomal subunit protein uL2cz (274 aa).

Disordered stretches follow at residues 1 to 25 and 224 to 274; these read MAIH…VKSN and NPVD…RRSK. Polar residues predominate over residues 7–25; sequence KTSTPSTRNGTVDSQVKSN.

It belongs to the universal ribosomal protein uL2 family. Part of the 50S ribosomal subunit.

It localises to the plastid. Its subcellular location is the chloroplast. In Coffea arabica (Arabian coffee), this protein is Large ribosomal subunit protein uL2cz (rpl2-A).